The primary structure comprises 759 residues: MTTSFVSDWMAQEGQKLSDCKHDDPFSVLGIQPFQGKWIARIWMPEAEEVELLINGSLIPLTPPNHPWIFEALLDENPGSNYQVKVHRGGIKHQQYDPWSFRDEWMGEIDTHLFAEGNHHHIWRRMGAHLSEMNGVCGVMFCLWAPNARSVSVIGEVNSWDGRHHPMQKRMGGIWELFIPGLKEGALYKYEIRTQNGHCYEKSDPYGFEHEVRPAQSSKVSRIDNFKWSDQEWITKRDSSNPLDQPISVYEMHLGSWLHAPSDEPFIEPNGNKRTAVPAADLKPGTRLLTYPELKQKLIKYVKERGFTHIELMPISEHPFDGSWGYQATGWYAPTSRYGTPNEFRAFVDACHSEGIGVILDWVPGHFPKDSHGLAFFDGSHLYEHSDPRIGEHKEWGTLIFNYSRNEVRNFLVANLVFWFEQFHIDGIRVDAVASMLYKDYLRPEGQWIPNEDGGNENTEAVKFLQQANHVLFEHFPGALSIAEESTTWPGVTNPTDVGGLGFNLKWNMGWMHDMLDYFEVDPWFRQFHQNNVTFSITYNYTENFMLALSHDEVVHGKSHLLHKMPGDDWRKYANTRALLAYMWTHPGKKTIFMGMEFGQRKEWNVWDDLEWDLLGYQPHQGIQRLVDDLNVLYKSNPALWRDDFNQYGFQWIDCKDNKNSVISFMRRETLNNEWLIVVANFTPESHPNYRVGVPLEGFYEEIFNTDSDKYGGSNTGNMGGKASEKWSIHEYEDSIDLSLPPLSVLVFKYAQKKSPNEN.

Residue Asp431 is the Nucleophile of the active site. The active-site Proton donor is the Glu484.

This sequence belongs to the glycosyl hydrolase 13 family. GlgB subfamily. In terms of assembly, monomer.

The enzyme catalyses Transfers a segment of a (1-&gt;4)-alpha-D-glucan chain to a primary hydroxy group in a similar glucan chain.. It participates in glycan biosynthesis; glycogen biosynthesis. In terms of biological role, catalyzes the formation of the alpha-1,6-glucosidic linkages in glycogen by scission of a 1,4-alpha-linked oligosaccharide from growing alpha-1,4-glucan chains and the subsequent attachment of the oligosaccharide to the alpha-1,6 position. This Prochlorococcus marinus (strain MIT 9211) protein is 1,4-alpha-glucan branching enzyme GlgB.